We begin with the raw amino-acid sequence, 475 residues long: UDP-N-acetylmuramate--L-alanine ligase (475 aa).

114–120 contacts ATP; sequence GTHGKTT.

It belongs to the MurCDEF family.

The protein localises to the cytoplasm. The enzyme catalyses UDP-N-acetyl-alpha-D-muramate + L-alanine + ATP = UDP-N-acetyl-alpha-D-muramoyl-L-alanine + ADP + phosphate + H(+). It functions in the pathway cell wall biogenesis; peptidoglycan biosynthesis. Functionally, cell wall formation. In Bartonella bacilliformis (strain ATCC 35685 / KC583 / Herrer 020/F12,63), this protein is UDP-N-acetylmuramate--L-alanine ligase.